Here is a 522-residue protein sequence, read N- to C-terminus: Lysine--tRNA ligase (522 aa).

The 'HIGH' region signature appears at 44 to 52 (PSGLPHIGT). Residues 290–294 (KISKS) carry the 'KMSKS' region motif. An ATP-binding site is contributed by K293.

Belongs to the class-I aminoacyl-tRNA synthetase family.

The protein localises to the cytoplasm. It carries out the reaction tRNA(Lys) + L-lysine + ATP = L-lysyl-tRNA(Lys) + AMP + diphosphate. This is Lysine--tRNA ligase from Rickettsia rickettsii (strain Iowa).